A 217-amino-acid chain; its full sequence is Adenylate kinase (217 aa).

10–15 (GAGKGT) lines the ATP pocket. Positions 30–59 (STGDIFRKNISDKTPLGIEAKEYLDKGQLV) are NMP. AMP-binding positions include threonine 31, arginine 36, 57–59 (QLV), 85–88 (GFPR), and glutamine 92. Positions 126-163 (GRRICPSCGASYHVKFNPPKLKDKCDICNNDIIQRKDD) are LID. ATP is bound at residue arginine 127. Zn(2+) is bound by residues cysteine 130 and cysteine 133. An ATP-binding site is contributed by 136-137 (SY). Zn(2+)-binding residues include cysteine 150 and cysteine 153. AMP is bound by residues arginine 160 and arginine 171. Glycine 199 serves as a coordination point for ATP.

It belongs to the adenylate kinase family. Monomer.

It is found in the cytoplasm. It catalyses the reaction AMP + ATP = 2 ADP. Its pathway is purine metabolism; AMP biosynthesis via salvage pathway; AMP from ADP: step 1/1. Its function is as follows. Catalyzes the reversible transfer of the terminal phosphate group between ATP and AMP. Plays an important role in cellular energy homeostasis and in adenine nucleotide metabolism. The chain is Adenylate kinase from Clostridium kluyveri (strain NBRC 12016).